A 213-amino-acid polypeptide reads, in one-letter code: High frequency lysogenization protein HflD homolog (213 aa).

Residues 79–122 are a coiled coil; sequence QGLNAELTRYTLSLMVLERKLSSAKGALNTLGDRINGLQRQLDH.

This sequence belongs to the HflD family.

It is found in the cytoplasm. The protein resides in the cell inner membrane. This Salmonella typhi protein is High frequency lysogenization protein HflD homolog.